We begin with the raw amino-acid sequence, 241 residues long: 1-(5-phosphoribosyl)-5-[(5-phosphoribosylamino)methylideneamino] imidazole-4-carboxamide isomerase (241 aa).

Catalysis depends on Asp10, which acts as the Proton acceptor. Residue Asp131 is the Proton donor of the active site.

It belongs to the HisA/HisF family.

Its subcellular location is the cytoplasm. It carries out the reaction 1-(5-phospho-beta-D-ribosyl)-5-[(5-phospho-beta-D-ribosylamino)methylideneamino]imidazole-4-carboxamide = 5-[(5-phospho-1-deoxy-D-ribulos-1-ylimino)methylamino]-1-(5-phospho-beta-D-ribosyl)imidazole-4-carboxamide. The protein operates within amino-acid biosynthesis; L-histidine biosynthesis; L-histidine from 5-phospho-alpha-D-ribose 1-diphosphate: step 4/9. The polypeptide is 1-(5-phosphoribosyl)-5-[(5-phosphoribosylamino)methylideneamino] imidazole-4-carboxamide isomerase (Bifidobacterium longum subsp. infantis (strain ATCC 15697 / DSM 20088 / JCM 1222 / NCTC 11817 / S12)).